The chain runs to 328 residues: POU domain, class 5, transcription factor 2 (328 aa).

Residues 1–25 (MAGHRPSNHFCPLPGSGGGGPRGPM) are disordered. The POU-specific domain occupies 118–192 (DISGILKELQ…LLKKWLKEVE (75 aa)). The segment at residues 210-269 (GKWRRASRERRIGNSLEKFFQRCPKPTPQQISHIAGCLQLQKDVVRVWFYNRSKMGSRPT) is a DNA-binding region (homeobox).

The protein belongs to the POU transcription factor family. Class-5 subfamily. In terms of tissue distribution, expressed in skeletal and cardiac muscles, brain, heart and lung. Little or no detectable expression found in pancreas, kidney, liver or placenta.

The protein localises to the nucleus. Its function is as follows. Transcription factor that binds preferentially to the octamer motif (5'-ATGTTAAT-3'). May exert a regulatory function in meiotic events that are required for terminal differentiation of male germ cell. This chain is POU domain, class 5, transcription factor 2 (POU5F2), found in Homo sapiens (Human).